The following is a 414-amino-acid chain: 5-aminolevulinate synthase (414 aa).

Substrate is bound by residues Arg-22, Ser-133, and Lys-152. Pyridoxal 5'-phosphate contacts are provided by Ser-185, His-213, and Thr-241. Lys-244 is an active-site residue. Lys-244 is subject to N6-(pyridoxal phosphate)lysine. Positions 273 and 274 each coordinate pyridoxal 5'-phosphate. Thr-359 is a substrate binding site.

The protein belongs to the class-II pyridoxal-phosphate-dependent aminotransferase family. In terms of assembly, homodimer. Pyridoxal 5'-phosphate is required as a cofactor.

It catalyses the reaction succinyl-CoA + glycine + H(+) = 5-aminolevulinate + CO2 + CoA. The protein operates within porphyrin-containing compound metabolism; protoporphyrin-IX biosynthesis; 5-aminolevulinate from glycine: step 1/1. The protein is 5-aminolevulinate synthase (hemA) of Rickettsia felis (strain ATCC VR-1525 / URRWXCal2) (Rickettsia azadi).